Consider the following 145-residue polypeptide: Large ribosomal subunit protein uL15 (145 aa).

The disordered stretch occupies residues 1–58; it reads MFNLLKPKGASKRRKIVGRGPGSGLGKTSGRGQKGQKARNTSPRLGFEGGQTPLYRRL. The segment covering 19-33 has biased composition (gly residues); that stretch reads RGPGSGLGKTSGRGQ.

Belongs to the universal ribosomal protein uL15 family. In terms of assembly, part of the 50S ribosomal subunit.

Its function is as follows. Binds to the 23S rRNA. This Borrelia garinii subsp. bavariensis (strain ATCC BAA-2496 / DSM 23469 / PBi) (Borreliella bavariensis) protein is Large ribosomal subunit protein uL15.